We begin with the raw amino-acid sequence, 343 residues long: Protein RecA (343 aa).

ATP is bound at residue 68-75; the sequence is GPESSGKT.

The protein belongs to the RecA family.

Its subcellular location is the cytoplasm. Functionally, can catalyze the hydrolysis of ATP in the presence of single-stranded DNA, the ATP-dependent uptake of single-stranded DNA by duplex DNA, and the ATP-dependent hybridization of homologous single-stranded DNAs. It interacts with LexA causing its activation and leading to its autocatalytic cleavage. In Syntrophobacter fumaroxidans (strain DSM 10017 / MPOB), this protein is Protein RecA.